Here is a 385-residue protein sequence, read N- to C-terminus: Heptahelical transmembrane protein 4 (385 aa).

Over residues 1 to 12 (MGDEAEIKEHLK) the composition is skewed to basic and acidic residues. The interval 1-22 (MGDEAEIKEHLKPQASSETMDK) is disordered. Over 1 to 79 (MGDEAEIKEH…LSIFTIHNET (79 aa)) the chain is Cytoplasmic. Residues 80 to 100 (LNVWTHLIGFFLFLALTIYTA) traverse the membrane as a helical segment. Residues 101-191 (TKVPSVVDLH…LIFRPITRWP (91 aa)) are Extracellular-facing. A helical transmembrane segment spans residues 192-212 (FYAFLGGAMFCLLASSTCHLL). The Cytoplasmic segment spans residues 213–228 (SCHSERVSYIMLRLDY). The helical transmembrane segment at 229–249 (AGIAALIATSFYPPVYYSFMC) threads the bilayer. The Extracellular segment spans residues 250 to 256 (DPFFCNL). Residues 257–277 (YLGFITILGIATVLVSLLPVF) traverse the membrane as a helical segment. Residues 278 to 288 (QSPEFRVVRAS) are Cytoplasmic-facing. Residues 289 to 309 (LFFGMGFSGLAPILHKLIIFW) form a helical membrane-spanning segment. Topologically, residues 310–313 (DQPE) are extracellular. The chain crosses the membrane as a helical span at residues 314–334 (ALHTTGYEILMGLLYGLGALV). Residues 335 to 356 (YATRIPERWMPGKFDIAGHSHQ) are Cytoplasmic-facing. Residues 357–377 (LFHVLVVAGAFTHYRAGLVYL) traverse the membrane as a helical segment.

The protein belongs to the ADIPOR family. As to expression, expressed in roots, leaves, stems and flowers.

It is found in the membrane. Functionally, may play a role in abiotic stress response. The sequence is that of Heptahelical transmembrane protein 4 (HHP4) from Arabidopsis thaliana (Mouse-ear cress).